The following is a 296-amino-acid chain: Transmembrane O-methyltransferase (296 aa).

A helical transmembrane segment spans residues 36-56 (VGTMSPAIALAFLPLVVTLLV). S-adenosyl-L-methionine is bound by residues E142, 144–145 (GT), S150, E168, and S198.

This sequence belongs to the class I-like SAM-binding methyltransferase superfamily. Cation-dependent O-methyltransferase family. Interacts with LHFPL5, PCDH15, TMC1, TMC2 and TMIE. Interacts directly with TMC1. The interaction of TOMT with TMC1 and TMC2 is required for the transportation of TMC1/2 into the stereocilia of hair cells.

It is found in the membrane. The protein resides in the cytoplasm. It localises to the endoplasmic reticulum. The enzyme catalyses a catechol + S-adenosyl-L-methionine = a guaiacol + S-adenosyl-L-homocysteine + H(+). Catalyzes the O-methylation, and thereby the inactivation, of catecholamine neurotransmitters and catechol hormones. Required for auditory function. Component of the cochlear hair cell's mechanotransduction (MET) machinery. Involved in the assembly of the asymmetric tip-link MET complex. Required for transportation of TMC1 and TMC2 proteins into the mechanically sensitive stereocilia of the hair cells. The function in MET is independent of the enzymatic activity. This Macaca mulatta (Rhesus macaque) protein is Transmembrane O-methyltransferase.